Here is a 160-residue protein sequence, read N- to C-terminus: Major pollen allergen Bet v 1-A (160 aa).

Brassinolide is bound by residues K55, Y82, Y84, and N101.

Belongs to the BetVI family.

The protein resides in the cytoplasm. In terms of biological role, may be a general steroid carrier protein. This Betula pendula (European white birch) protein is Major pollen allergen Bet v 1-A (BETVIA).